A 112-amino-acid polypeptide reads, in one-letter code: Nucleoid-associated protein lpp2803 (112 aa).

It belongs to the YbaB/EbfC family. Homodimer.

The protein resides in the cytoplasm. It localises to the nucleoid. Functionally, binds to DNA and alters its conformation. May be involved in regulation of gene expression, nucleoid organization and DNA protection. The protein is Nucleoid-associated protein lpp2803 of Legionella pneumophila (strain Paris).